A 607-amino-acid chain; its full sequence is Elongation factor 4 (607 aa).

Positions 11-193 constitute a tr-type G domain; that stretch reads GKIRNFSIIA…QIVEKVPAPT (183 aa). Residues 23–28 and 140–143 each bind GTP; these read DHGKST and NKID.

This sequence belongs to the TRAFAC class translation factor GTPase superfamily. Classic translation factor GTPase family. LepA subfamily.

It localises to the cell membrane. It carries out the reaction GTP + H2O = GDP + phosphate + H(+). Functionally, required for accurate and efficient protein synthesis under certain stress conditions. May act as a fidelity factor of the translation reaction, by catalyzing a one-codon backward translocation of tRNAs on improperly translocated ribosomes. Back-translocation proceeds from a post-translocation (POST) complex to a pre-translocation (PRE) complex, thus giving elongation factor G a second chance to translocate the tRNAs correctly. Binds to ribosomes in a GTP-dependent manner. This Streptococcus pneumoniae (strain JJA) protein is Elongation factor 4.